The following is a 629-amino-acid chain: Putrebactin synthase (629 aa).

This sequence belongs to the IucA/IucC family. In terms of assembly, homodimer.

The catalysed reaction is 2 N-(3-carboxypropanoyl)-N-hydroxyputrescine + 2 ATP = putrebactin + 2 AMP + 2 diphosphate + 2 H(+). The enzyme catalyses 2 N-(3-carboxypropanoyl)-N-hydroxyputrescine + ATP = pre-putrebactin + AMP + diphosphate + H(+). It carries out the reaction pre-putrebactin + ATP = putrebactin + AMP + diphosphate + H(+). It functions in the pathway siderophore biosynthesis. With respect to regulation, requires Mg(2+) for activity. Functionally, ligase involved in the biosynthesis of the siderophore putrebactin. Catalyzes the ATP-dependent head-to-tail dimerization of N-hydroxy-N-succinyl-putrescine (HSP) to give pre-putrebactin and subsequent macrocyclization of pre-putrebactin to give putrebactin. The protein is Putrebactin synthase of Shewanella sp. (strain MR-4).